We begin with the raw amino-acid sequence, 762 residues long: 5-methyltetrahydropteroyltriglutamate--homocysteine methyltransferase (762 aa).

5-methyltetrahydropteroyltri-L-glutamate contacts are provided by residues 18–21 and lysine 112; that span reads REWK. Residues 435–437 and glutamate 488 each bind L-homocysteine; that span reads IGS. Residues 435–437 and glutamate 488 contribute to the L-methionine site; that span reads IGS. 5-methyltetrahydropteroyltri-L-glutamate-binding positions include 519–520 and tryptophan 565; that span reads RC. Position 603 (aspartate 603) interacts with L-homocysteine. Aspartate 603 serves as a coordination point for L-methionine. Glutamate 609 contacts 5-methyltetrahydropteroyltri-L-glutamate. 3 residues coordinate Zn(2+): histidine 645, cysteine 647, and glutamate 669. Histidine 698 (proton donor) is an active-site residue. Cysteine 730 contributes to the Zn(2+) binding site.

This sequence belongs to the vitamin-B12 independent methionine synthase family. Requires Zn(2+) as cofactor.

The enzyme catalyses 5-methyltetrahydropteroyltri-L-glutamate + L-homocysteine = tetrahydropteroyltri-L-glutamate + L-methionine. It participates in amino-acid biosynthesis; L-methionine biosynthesis via de novo pathway; L-methionine from L-homocysteine (MetE route): step 1/1. In terms of biological role, catalyzes the transfer of a methyl group from 5-methyltetrahydrofolate to homocysteine resulting in methionine formation. The polypeptide is 5-methyltetrahydropteroyltriglutamate--homocysteine methyltransferase (Bacillus velezensis (strain DSM 23117 / BGSC 10A6 / LMG 26770 / FZB42) (Bacillus amyloliquefaciens subsp. plantarum)).